The chain runs to 281 residues: Polyamine aminopropyltransferase (281 aa).

The 235-residue stretch at 2 to 236 (DLWLKEGQIS…GYWSFTIGSK (235 aa)) folds into the PABS domain. Q31 is a binding site for S-methyl-5'-thioadenosine. Spermidine contacts are provided by H62 and D86. Residues E106 and 138 to 139 (DG) each bind S-methyl-5'-thioadenosine. Residue D156 is the Proton acceptor of the active site. Residue 156–159 (DSTD) participates in spermidine binding.

It belongs to the spermidine/spermine synthase family. In terms of assembly, homodimer or homotetramer.

It is found in the cytoplasm. It carries out the reaction S-adenosyl 3-(methylsulfanyl)propylamine + putrescine = S-methyl-5'-thioadenosine + spermidine + H(+). It participates in amine and polyamine biosynthesis; spermidine biosynthesis; spermidine from putrescine: step 1/1. Its function is as follows. Catalyzes the irreversible transfer of a propylamine group from the amino donor S-adenosylmethioninamine (decarboxy-AdoMet) to putrescine (1,4-diaminobutane) to yield spermidine. The protein is Polyamine aminopropyltransferase of Clostridium tetani (strain Massachusetts / E88).